Consider the following 503-residue polypeptide: Cytochrome P450 3A7 (503 aa).

Position 442 (Cys442) interacts with heme.

It belongs to the cytochrome P450 family. Requires heme as cofactor. As to expression, expressed in fetal liver (at protein level).

The protein resides in the endoplasmic reticulum membrane. Its subcellular location is the microsome membrane. The catalysed reaction is an organic molecule + reduced [NADPH--hemoprotein reductase] + O2 = an alcohol + oxidized [NADPH--hemoprotein reductase] + H2O + H(+). It catalyses the reaction 3beta-hydroxyandrost-5-en-17-one + reduced [NADPH--hemoprotein reductase] + O2 = 3beta,16alpha-dihydroxy-androst-5-en-17-one + oxidized [NADPH--hemoprotein reductase] + H2O + H(+). The enzyme catalyses dehydroepiandrosterone 3-sulfate + reduced [NADPH--hemoprotein reductase] + O2 = 16alpha-hydroxydehydroepiandrosterone 3-sulfate + oxidized [NADPH--hemoprotein reductase] + H2O + H(+). It carries out the reaction testosterone + reduced [NADPH--hemoprotein reductase] + O2 = 6beta,17beta-dihydroxyandrost-4-en-3-one + oxidized [NADPH--hemoprotein reductase] + H2O + H(+). The catalysed reaction is estrone + reduced [NADPH--hemoprotein reductase] + O2 = 2-hydroxyestrone + oxidized [NADPH--hemoprotein reductase] + H2O + H(+). It catalyses the reaction estrone + reduced [NADPH--hemoprotein reductase] + O2 = 4-hydroxyestrone + oxidized [NADPH--hemoprotein reductase] + H2O + H(+). The enzyme catalyses estrone + reduced [NADPH--hemoprotein reductase] + O2 = 16alpha-hydroxyestrone + oxidized [NADPH--hemoprotein reductase] + H2O + H(+). It carries out the reaction 17beta-estradiol + reduced [NADPH--hemoprotein reductase] + O2 = 2-hydroxy-17beta-estradiol + oxidized [NADPH--hemoprotein reductase] + H2O + H(+). The catalysed reaction is 17beta-estradiol + reduced [NADPH--hemoprotein reductase] + O2 = 6beta-hydroxyestradiol-17beta + oxidized [NADPH--hemoprotein reductase] + H2O + H(+). It catalyses the reaction all-trans-retinoate + reduced [NADPH--hemoprotein reductase] + O2 = all-trans-4-hydroxyretinoate + oxidized [NADPH--hemoprotein reductase] + H2O + H(+). The enzyme catalyses all-trans-retinoate + reduced [NADPH--hemoprotein reductase] + O2 = all-trans-18-hydroxyretinoate + oxidized [NADPH--hemoprotein reductase] + H2O + H(+). It participates in steroid hormone biosynthesis. Its pathway is cofactor metabolism; retinol metabolism. Its function is as follows. A cytochrome P450 monooxygenase involved in the metabolism of steroid hormones and vitamins during embryogenesis. Mechanistically, uses molecular oxygen inserting one oxygen atom into a substrate, and reducing the second into a water molecule, with two electrons provided by NADPH via cytochrome P450 reductase (NADPH--hemoprotein reductase). Catalyzes the hydroxylation of carbon-hydrogen bonds. Metabolizes 3beta-hydroxyandrost-5-en-17-one (dehydroepiandrosterone, DHEA), a precursor in the biosynthesis of androgen and estrogen steroid hormones. Exhibits high catalytic activity for the formation of hydroxyestrogens from estrone (E1), particularly D-ring hydroxylated estrone at the C16-alpha position. Mainly hydroxylates all trans-retinoic acid (atRA) to 4-hydroxyretinoate and may play a role in atRA clearance during fetal development. Also involved in the oxidative metabolism of xenobiotics including anticonvulsants. The chain is Cytochrome P450 3A7 from Homo sapiens (Human).